A 358-amino-acid polypeptide reads, in one-letter code: Serine/threonine-protein phosphatase 2A activator (358 aa).

The tract at residues 1 to 20 is disordered; it reads MAEGERQPPPDSSEEAPPAT. A2 carries the N-acetylalanine modification. ATP is bound by residues R183, T188, and G189. Residues G243 and D249 each coordinate Mg(2+). Residues P339, Q342, and H343 each coordinate ATP.

Belongs to the PTPA-type PPIase family. As to quaternary structure, associates with PP2A heterodimeric core enzyme PP2A(D), composed of a 36 kDa catalytic subunit (subunit C) and a 65 kDa constant regulatory subunit (PR65 or subunit A). Interacts with the catalytic subunit PPP2CA (via C-terminus). Interacts with PPP2CB. In terms of tissue distribution, widely expressed.

The protein localises to the cytoplasm. The protein resides in the nucleus. The catalysed reaction is [protein]-peptidylproline (omega=180) = [protein]-peptidylproline (omega=0). Its function is as follows. PPIases accelerate the folding of proteins. It catalyzes the cis-trans isomerization of proline imidic peptide bonds in oligopeptides. Acts as a regulatory subunit for serine/threonine-protein phosphatase 2A (PP2A). Modulates PP2A activity or substrate specificity, probably by inducing a conformational change in the catalytic subunit, a proposed direct target of the PPIase. Can reactivate inactive phosphatase PP2A-phosphatase methylesterase complexes (PP2A(i)) in presence of ATP and Mg(2+). Reversibly stimulates the variable phosphotyrosyl phosphatase activity of PP2A core heterodimer PP2A(D) in presence of ATP and Mg(2+) (in vitro). The phosphotyrosyl phosphatase activity is dependent of an ATPase activity of the PP2A(D):PPP2R4 complex. Is involved in apoptosis; the function appears to be independent from PP2A. The sequence is that of Serine/threonine-protein phosphatase 2A activator from Homo sapiens (Human).